The chain runs to 394 residues: GPI mannosyltransferase 2 (394 aa).

9 consecutive transmembrane segments (helical) span residues 2–22 (LWKL…IIYF), 47–67 (YYNV…SVYF), 104–124 (LTSI…LYYL), 132–152 (FGLV…LTGN), 185–205 (SITN…NFTV), 232–252 (IILS…TNIY), 293–313 (IPNF…LGYM), 323–343 (LLPL…FWNI), and 371–391 (YAIG…AAFL).

It belongs to the PIGV family.

The protein localises to the endoplasmic reticulum membrane. It functions in the pathway glycolipid biosynthesis; glycosylphosphatidylinositol-anchor biosynthesis. Its function is as follows. Mannosyltransferase involved in glycosylphosphatidylinositol-anchor biosynthesis. Transfers the second mannose to the glycosylphosphatidylinositol during GPI precursor assembly. The sequence is that of GPI mannosyltransferase 2 (GPI18) from Candida albicans (strain SC5314 / ATCC MYA-2876) (Yeast).